The following is a 162-amino-acid chain: NADH-quinone oxidoreductase subunit I (162 aa).

4Fe-4S ferredoxin-type domains follow at residues 54 to 83 and 93 to 122; these read RRYE…INST and SSYE…ETNI. The [4Fe-4S] cluster site is built by C63, C66, C69, C73, C102, C105, C108, and C112.

This sequence belongs to the complex I 23 kDa subunit family. In terms of assembly, NDH-1 is composed of 14 different subunits. Subunits NuoA, H, J, K, L, M, N constitute the membrane sector of the complex. [4Fe-4S] cluster serves as cofactor.

Its subcellular location is the cell inner membrane. The catalysed reaction is a quinone + NADH + 5 H(+)(in) = a quinol + NAD(+) + 4 H(+)(out). NDH-1 shuttles electrons from NADH, via FMN and iron-sulfur (Fe-S) centers, to quinones in the respiratory chain. The immediate electron acceptor for the enzyme in this species is believed to be ubiquinone. Couples the redox reaction to proton translocation (for every two electrons transferred, four hydrogen ions are translocated across the cytoplasmic membrane), and thus conserves the redox energy in a proton gradient. This is NADH-quinone oxidoreductase subunit I from Francisella tularensis subsp. tularensis (strain FSC 198).